The following is an 822-amino-acid chain: Protein smoothened (822 aa).

Positions 1-28 (MSSKRPCSIVGSFWMLWIWTATSMVARA) are cleaved as a signal peptide. Topologically, residues 29–212 (VILHPNETIF…EDEHSDMHSY (184 aa)) are extracellular. Asn-34 is a glycosylation site (N-linked (GlcNAc...) asparagine). Disulfide bonds link Cys-42-Cys-157, Cys-48-Cys-112, Cys-56-Cys-105, Cys-96-Cys-132, and Cys-125-Cys-147. Positions 43–160 (KKSTTCEVLK…EQFPKGCQNE (118 aa)) constitute an FZ domain. Asp-73 contributes to the cholesterol binding site. N-linked (GlcNAc...) asparagine glycosylation is present at Asn-167. 3 cysteine pairs are disulfide-bonded: Cys-172/Cys-192, Cys-196/Cys-274, and Cys-293/Cys-369. Residues 213-233 (IAVFGTITLLCTFFTLATFLA) traverse the membrane as a helical segment. Over 234-241 (DWKNSNRY) the chain is Cytoplasmic. A helical membrane pass occupies residues 242–262 (PAVILFYVNACFFIGSIGWLA). Residues 263-293 (QFMDGARNEIVCKSDNTMRLGEPSSTETLSC) are Extracellular-facing. A helical transmembrane segment spans residues 294–314 (VIIFVIVYYSLMSGVIWFVML). Residues 315-335 (TYAWHTSFKALGTTHQPLSGK) are Cytoplasmic-facing. The helical transmembrane segment at 336–356 (TSYFHLVTWSIPFILTVAILA) threads the bilayer. The Extracellular portion of the chain corresponds to 357–381 (NSQVDADSVSGICFVGYRYYEYRAG). Tyr-373 serves as a coordination point for cholesterol. A helical membrane pass occupies residues 382–402 (FVLAPIGFVLVIGGYFLIRGV). Over 403-430 (MTLFSIKSNHPGLLSEKAASKINETMLR) the chain is Cytoplasmic. Residues 431–451 (LGIFGFLAFGFVLITFGCHFY) form a helical membrane-spanning segment. The Extracellular portion of the chain corresponds to 452–503 (DFFNQAEWERSFREYVLCEANVTIAHQTNKPIPECAIKNRPSLLVGKINLFS). A disulfide bridge links Cys-469 with Cys-486. A glycan (N-linked (GlcNAc...) asparagine) is linked at Asn-472. A helical membrane pass occupies residues 504–524 (MFGTGIAMSTWVWTKATILIW). Topologically, residues 525–822 (KRTWFRIIGR…AELLDADSDF (298 aa)) are cytoplasmic. A disordered region spans residues 645–687 (MMKRKKKKKKRRKEVRPAGPAADEGNPAYHRREFGPSAVPRLP). Positions 647 to 658 (KRKKKKKKRRKE) are enriched in basic residues.

It belongs to the G-protein coupled receptor Fz/Smo family. In terms of assembly, monomer.

Its subcellular location is the cell membrane. The protein resides in the cell projection. It is found in the cilium. Its function is as follows. G protein-coupled receptor which associates with the patched protein (ptch) to transduce Hedgehog protein signaling. Binding of sonic hedgehog (shh) to its receptor patched prevents inhibition of smoothened (smo) by patched. When active, smo binds to and sequesters protein kinase A catalytic subunit prkaca at the cell membrane, preventing prkaca-mediated phosphorylation of gli transcription factors which releases the gli proteins from prkaca-mediated inhibition and allows for transcriptional activation of Hedgehog signaling pathway target genes. Required for the development of primary and secondary motoneurons but not for the specification of midbrain dopaminergic neurons or development of the medial floor plate. Required for induction of lateral floor plate and posterior motoneurons, anterior neural plate patterning, dorsoventral forebrain patterning, dorsoventral retinal patterning, optic stalk development, and formation of the forebrain primary axonal scaffold. Required to regulate the formation of a subset of cerebellar neurons by limiting wnt1 expression which controls cerebellar expression of transcription factor olig2. Required for development of the pancreas. Required for muscle development. Required for the formation of a single continuous intestinal lumen from multiple discontinuous lumens, probably by regulating remodeling through rab11a-mediated trafficking to facilitate lumen fusion. Required for development of the adenohypophysis. Required for anteroposterior patterning of the otic vesicle. Required for development of the anterior craniofacial skeleton. Required for patterning of the caudal fin. Required during gastrulation and early somitogenesis stages to promote cardiomyocyte formation by regulating the specification of myocardial progenitors. Required for induction of arterial endothelial cell formation by repressing venous cell fate. The sequence is that of Protein smoothened from Danio rerio (Zebrafish).